A 751-amino-acid chain; its full sequence is Collagen alpha-1(XIII) chain (751 aa).

Residues 1–24 (MVAERTRKAAASGSRGPGELGAPG) form a disordered region. Residues 1–40 (MVAERTRKAAASGSRGPGELGAPGPGTVALAEQCARLPSP) lie on the Cytoplasmic side of the membrane. The tract at residues 1-119 (MVAERTRKAA…KMSPGCNCPP (119 aa)) is nonhelical region 1 (NC1). A compositionally biased stretch (gly residues) spans 15-24 (RGPGELGAPG). Residues 41–59 (GCCGLLALALCSLALSLLA) form a helical; Signal-anchor for type II membrane protein membrane-spanning segment. The Extracellular segment spans residues 60–751 (HFRTAELQAR…GLPVQGCWNK (692 aa)). Disordered stretches follow at residues 108-127 (APKM…PTGR), 190-225 (PGHP…EYPH), and 265-449 (TFQG…EMVD). Pro residues predominate over residues 116–125 (NCPPGPPGPT). Residues 120–223 (GPPGPTGRPG…KGEKGQCGEY (104 aa)) form a triple-helical region 1 (COL1) region. The span at 204-213 (PRGQPGPQGQ) shows a compositional bias: low complexity. Positions 214 to 225 (KGEKGQCGEYPH) are enriched in basic and acidic residues. Residues 224–273 (PHREYPGGMLAALRSNPIMSLKLLPLLNSVRLAPPPVIKRRTFQGEQSQT) form a nonhelical region 2 (NC2) region. A triple-helical region 2 (COL2) region spans residues 274–445 (GIQGPPGPPG…KGAKGEPGKG (172 aa)). Composition is skewed to pro residues over residues 278 to 288 (PPGPPGPPGPS), 296 to 312 (LPGP…PGPK), and 391 to 402 (PGPPGLPGPPGP). Low complexity predominate over residues 403-436 (KGEAGVDGQAGPPGQQGDKGQPGAAGEQGPSGPK). Over residues 438–447 (AKGEPGKGEM) the composition is skewed to basic and acidic residues. The interval 446–467 (EMVDYNGSINEALQEIRTLALM) is nonhelical region 3 (NC3). Residue Asn451 is glycosylated (N-linked (GlcNAc...) asparagine). The disordered stretch occupies residues 466–751 (LMGPPGLPGQ…GLPVQGCWNK (286 aa)). The interval 468 to 733 (GPPGLPGQTG…KGDQGAPGLD (266 aa)) is triple-helical region 3 (COL3). The segment covering 470 to 484 (PGLPGQTGPPGPPGT) has biased composition (pro residues). Composition is skewed to basic and acidic residues over residues 499 to 509 (HDGDKGPRGKP), 557 to 568 (TGEKGEPGDEGR), and 586 to 596 (EKGEAGEKGDP). The segment covering 601-613 (PGPPGPEGPPGPP) has biased composition (pro residues). Residues 615 to 628 (LQGFPGPKGEAGLE) are compositionally biased toward low complexity. Positions 630 to 643 (SKGEKGSQGEKGDR) are enriched in basic and acidic residues. Pro residues predominate over residues 658–673 (PGPPGTPGPIGVPGPA). Residues 684–699 (DPGMTGPTGAAGLPGL) show a composition bias toward low complexity. The span at 706–726 (KGNRGERGKKGSRGPKGDKGD) shows a compositional bias: basic and acidic residues. Residues 734-751 (APCPLGEDGLPVQGCWNK) are nonhelical region 4 (NC4).

Homotrimer; disulfide-linked. Nucleation of the type XIII collagen triple helix is likely to occur at the N-terminal region with triple helix formation proceeding from the N- to the C-terminus. Interacts with FN1, perlecan/HSPG2 and NID2.

The protein resides in the cell membrane. It localises to the postsynaptic cell membrane. Involved in cell-matrix and cell-cell adhesion interactions that are required for normal development. May participate in the linkage between muscle fiber and basement membrane. May play a role in endochondral ossification of bone and branching morphogenesis of lung. Binds heparin. At neuromuscular junctions, may play a role in acetylcholine receptor clustering. This chain is Collagen alpha-1(XIII) chain, found in Mus musculus (Mouse).